Reading from the N-terminus, the 1164-residue chain is WASH complex subunit 5 (1164 aa).

The protein belongs to the strumpellin family. As to quaternary structure, probable component of the WASH complex.

This is WASH complex subunit 5 from Dictyostelium discoideum (Social amoeba).